A 307-amino-acid chain; its full sequence is tRNA pseudouridine synthase B (307 aa).

The active-site Nucleophile is the Asp-48.

The protein belongs to the pseudouridine synthase TruB family. Type 1 subfamily.

It catalyses the reaction uridine(55) in tRNA = pseudouridine(55) in tRNA. Its function is as follows. Responsible for synthesis of pseudouridine from uracil-55 in the psi GC loop of transfer RNAs. The protein is tRNA pseudouridine synthase B of Pasteurella multocida (strain Pm70).